The sequence spans 80 residues: Large ribosomal subunit protein bL31 (80 aa).

Residues C16, C18, C38, and C41 each contribute to the Zn(2+) site.

The protein belongs to the bacterial ribosomal protein bL31 family. Type A subfamily. In terms of assembly, part of the 50S ribosomal subunit. The cofactor is Zn(2+).

Its function is as follows. Binds the 23S rRNA. The protein is Large ribosomal subunit protein bL31 of Mycobacterium avium (strain 104).